The chain runs to 218 residues: Ependymin (218 aa).

An N-terminal signal peptide occupies residues 1–20; that stretch reads MHTVKLLCVVFSCLCAVAWG. N-linked (GlcNAc...) asparagine glycans are attached at residues Asn-74 and Asn-97.

Belongs to the ependymin family. As to quaternary structure, forms disulfide-linked dimers. Binds calcium through the terminal sialic acids.

The protein localises to the secreted. In terms of biological role, may play a role in neural plasticity. May be involved during axon regeneration. The chain is Ependymin (epd) from Devario aequipinnatus (Giant danio).